The chain runs to 487 residues: Protein nucleotidyltransferase YdiU (487 aa).

ATP contacts are provided by glycine 92, arginine 95, lysine 106, aspartate 118, glycine 119, arginine 169, and arginine 176. Aspartate 253 acts as the Proton acceptor in catalysis. Mg(2+) contacts are provided by asparagine 254 and aspartate 263. Aspartate 263 provides a ligand contact to ATP.

It belongs to the SELO family. Mg(2+) is required as a cofactor. It depends on Mn(2+) as a cofactor.

The enzyme catalyses L-seryl-[protein] + ATP = 3-O-(5'-adenylyl)-L-seryl-[protein] + diphosphate. It carries out the reaction L-threonyl-[protein] + ATP = 3-O-(5'-adenylyl)-L-threonyl-[protein] + diphosphate. It catalyses the reaction L-tyrosyl-[protein] + ATP = O-(5'-adenylyl)-L-tyrosyl-[protein] + diphosphate. The catalysed reaction is L-histidyl-[protein] + UTP = N(tele)-(5'-uridylyl)-L-histidyl-[protein] + diphosphate. The enzyme catalyses L-seryl-[protein] + UTP = O-(5'-uridylyl)-L-seryl-[protein] + diphosphate. It carries out the reaction L-tyrosyl-[protein] + UTP = O-(5'-uridylyl)-L-tyrosyl-[protein] + diphosphate. Its function is as follows. Nucleotidyltransferase involved in the post-translational modification of proteins. It can catalyze the addition of adenosine monophosphate (AMP) or uridine monophosphate (UMP) to a protein, resulting in modifications known as AMPylation and UMPylation. This chain is Protein nucleotidyltransferase YdiU, found in Bordetella pertussis (strain Tohama I / ATCC BAA-589 / NCTC 13251).